Consider the following 318-residue polypeptide: NADH-ubiquinone oxidoreductase chain 1 (318 aa).

The next 8 helical transmembrane spans lie at 3 to 23 (TMNL…LTLV), 69 to 89 (ILYI…WTPL), 98 to 118 (FNLG…SILW), 135 to 155 (AVAQ…SILL), 171 to 191 (HLWL…STLA), 217 to 237 (AGPF…MNAL), 253 to 273 (ELFT…FLWI), and 294 to 314 (LPLT…ISSI).

This sequence belongs to the complex I subunit 1 family. Core subunit of respiratory chain NADH dehydrogenase (Complex I) which is composed of 45 different subunits.

Its subcellular location is the mitochondrion inner membrane. The enzyme catalyses a ubiquinone + NADH + 5 H(+)(in) = a ubiquinol + NAD(+) + 4 H(+)(out). Its function is as follows. Core subunit of the mitochondrial membrane respiratory chain NADH dehydrogenase (Complex I) which catalyzes electron transfer from NADH through the respiratory chain, using ubiquinone as an electron acceptor. Essential for the catalytic activity and assembly of complex I. This chain is NADH-ubiquinone oxidoreductase chain 1 (MT-ND1), found in Papio hamadryas (Hamadryas baboon).